Here is a 72-residue protein sequence, read N- to C-terminus: Sperm protein associated with the nucleus on the X chromosome N1 (72 aa).

The tract at residues 1–44 (MEQPTSSINGEKRKSPCESNNENDEMQETPNRDLAPEPSLKKMK) is disordered.

It belongs to the SPAN-X family.

The sequence is that of Sperm protein associated with the nucleus on the X chromosome N1 (SPANXN1) from Homo sapiens (Human).